A 208-amino-acid polypeptide reads, in one-letter code: TnpB-like protein MJ0012 (208 aa).

Positions 83, 86, 100, and 103 each coordinate Zn(2+).

This sequence belongs to the transposase 35 family.

This is TnpB-like protein MJ0012 from Methanocaldococcus jannaschii (strain ATCC 43067 / DSM 2661 / JAL-1 / JCM 10045 / NBRC 100440) (Methanococcus jannaschii).